A 146-amino-acid chain; its full sequence is UPF0260 protein VP2169 (146 aa).

Belongs to the UPF0260 family.

This Vibrio parahaemolyticus serotype O3:K6 (strain RIMD 2210633) protein is UPF0260 protein VP2169.